A 253-amino-acid chain; its full sequence is Phosphoribosylaminoimidazole-succinocarboxamide synthase (253 aa).

It belongs to the SAICAR synthetase family.

It carries out the reaction 5-amino-1-(5-phospho-D-ribosyl)imidazole-4-carboxylate + L-aspartate + ATP = (2S)-2-[5-amino-1-(5-phospho-beta-D-ribosyl)imidazole-4-carboxamido]succinate + ADP + phosphate + 2 H(+). It participates in purine metabolism; IMP biosynthesis via de novo pathway; 5-amino-1-(5-phospho-D-ribosyl)imidazole-4-carboxamide from 5-amino-1-(5-phospho-D-ribosyl)imidazole-4-carboxylate: step 1/2. This Dinoroseobacter shibae (strain DSM 16493 / NCIMB 14021 / DFL 12) protein is Phosphoribosylaminoimidazole-succinocarboxamide synthase.